A 982-amino-acid polypeptide reads, in one-letter code: Bifunctional glutamine synthetase adenylyltransferase/adenylyl-removing enzyme (982 aa).

An adenylyl removase region spans residues 1–460; the sequence is MSLPSLANLP…HFRQVIADPD (460 aa). The segment at 473-982 is adenylyl transferase; the sequence is GAEWIPLWEE…IRIWRELRLG (510 aa).

The protein belongs to the GlnE family. Mg(2+) is required as a cofactor.

It carries out the reaction [glutamine synthetase]-O(4)-(5'-adenylyl)-L-tyrosine + phosphate = [glutamine synthetase]-L-tyrosine + ADP. It catalyses the reaction [glutamine synthetase]-L-tyrosine + ATP = [glutamine synthetase]-O(4)-(5'-adenylyl)-L-tyrosine + diphosphate. Involved in the regulation of glutamine synthetase GlnA, a key enzyme in the process to assimilate ammonia. When cellular nitrogen levels are high, the C-terminal adenylyl transferase (AT) inactivates GlnA by covalent transfer of an adenylyl group from ATP to specific tyrosine residue of GlnA, thus reducing its activity. Conversely, when nitrogen levels are low, the N-terminal adenylyl removase (AR) activates GlnA by removing the adenylyl group by phosphorolysis, increasing its activity. The regulatory region of GlnE binds the signal transduction protein PII (GlnB) which indicates the nitrogen status of the cell. This chain is Bifunctional glutamine synthetase adenylyltransferase/adenylyl-removing enzyme, found in Pseudomonas aeruginosa (strain ATCC 15692 / DSM 22644 / CIP 104116 / JCM 14847 / LMG 12228 / 1C / PRS 101 / PAO1).